Reading from the N-terminus, the 892-residue chain is Alanine--tRNA ligase (892 aa).

Zn(2+) contacts are provided by histidine 593, histidine 597, cysteine 694, and histidine 698.

This sequence belongs to the class-II aminoacyl-tRNA synthetase family. Zn(2+) is required as a cofactor.

Its subcellular location is the cytoplasm. It carries out the reaction tRNA(Ala) + L-alanine + ATP = L-alanyl-tRNA(Ala) + AMP + diphosphate. Functionally, catalyzes the attachment of alanine to tRNA(Ala) in a two-step reaction: alanine is first activated by ATP to form Ala-AMP and then transferred to the acceptor end of tRNA(Ala). Also edits incorrectly charged Ser-tRNA(Ala) and Gly-tRNA(Ala) via its editing domain. The chain is Alanine--tRNA ligase from Helicobacter hepaticus (strain ATCC 51449 / 3B1).